The chain runs to 345 residues: Phosphate import ATP-binding protein PstB 2 (345 aa).

Residues 1 to 57 form a disordered region; that stretch reads MSDTPQSEPRRSDDRSGADDATAAAAGSTDAAAAAVSSKTGGIAGPPGGPGEVDGDE. Residues 8 to 18 show a composition bias toward basic and acidic residues; sequence EPRRSDDRSGA. The segment covering 19–35 has biased composition (low complexity); that stretch reads DDATAAAAGSTDAAAAA. The span at 42-52 shows a compositional bias: gly residues; that stretch reads GIAGPPGGPGE. One can recognise an ABC transporter domain in the interval 86–340; sequence VSVSDLDTYY…PQSQRVEDYV (255 aa). 118 to 125 is a binding site for ATP; that stretch reads GPSGCGKS.

This sequence belongs to the ABC transporter superfamily. Phosphate importer (TC 3.A.1.7) family. In terms of assembly, the complex is composed of two ATP-binding proteins (PstB), two transmembrane proteins (PstC and PstA) and a solute-binding protein (PstS).

The protein localises to the cell membrane. It catalyses the reaction phosphate(out) + ATP + H2O = ADP + 2 phosphate(in) + H(+). Part of the ABC transporter complex PstSACB involved in phosphate import. Responsible for energy coupling to the transport system. This chain is Phosphate import ATP-binding protein PstB 2, found in Halobacterium salinarum (strain ATCC 700922 / JCM 11081 / NRC-1) (Halobacterium halobium).